A 195-amino-acid polypeptide reads, in one-letter code: Probable GTP-binding protein EngB (195 aa).

One can recognise an EngB-type G domain in the interval 24–195 (ELPEIALAGR…EAWDAILEKL (172 aa)). GTP contacts are provided by residues 32–39 (GRSNVGKS), 59–63 (GKTQL), 77–80 (DVPG), 144–147 (TKAD), and 176–178 (FSS). 2 residues coordinate Mg(2+): Ser39 and Thr61.

The protein belongs to the TRAFAC class TrmE-Era-EngA-EngB-Septin-like GTPase superfamily. EngB GTPase family. Mg(2+) is required as a cofactor.

Functionally, necessary for normal cell division and for the maintenance of normal septation. This chain is Probable GTP-binding protein EngB, found in Streptococcus pneumoniae (strain JJA).